Here is a 455-residue protein sequence, read N- to C-terminus: UPF0210 protein Teth514_2074 (455 aa).

This sequence belongs to the UPF0210 family. In terms of assembly, homodimer.

The polypeptide is UPF0210 protein Teth514_2074 (Thermoanaerobacter sp. (strain X514)).